The primary structure comprises 346 residues: UDP-3-O-acylglucosamine N-acyltransferase (346 aa).

The Proton acceptor role is filled by histidine 253.

This sequence belongs to the transferase hexapeptide repeat family. LpxD subfamily. Homotrimer.

The enzyme catalyses a UDP-3-O-[(3R)-3-hydroxyacyl]-alpha-D-glucosamine + a (3R)-hydroxyacyl-[ACP] = a UDP-2-N,3-O-bis[(3R)-3-hydroxyacyl]-alpha-D-glucosamine + holo-[ACP] + H(+). It functions in the pathway bacterial outer membrane biogenesis; LPS lipid A biosynthesis. In terms of biological role, catalyzes the N-acylation of UDP-3-O-acylglucosamine using 3-hydroxyacyl-ACP as the acyl donor. Is involved in the biosynthesis of lipid A, a phosphorylated glycolipid that anchors the lipopolysaccharide to the outer membrane of the cell. This is UDP-3-O-acylglucosamine N-acyltransferase from Rickettsia conorii (strain ATCC VR-613 / Malish 7).